The chain runs to 156 residues: RNA polymerase sigma factor SigS (156 aa).

Positions 29 to 44 (EYYQLLLIKMWQLSQI) match the Polymerase core binding motif. Residues 126–145 (QFEIAEIMSLSLSTIKLIKM) constitute a DNA-binding region (H-T-H motif).

This sequence belongs to the sigma-70 factor family.

Its function is as follows. Sigma factors are initiation factors that promote the attachment of RNA polymerase to specific initiation sites and are then released. Sigma-S contributes to the protection against external stress, thus playing a role in cellular fitness and survival. The protein is RNA polymerase sigma factor SigS (sigS) of Staphylococcus aureus (strain Mu50 / ATCC 700699).